A 368-amino-acid polypeptide reads, in one-letter code: tRNA-specific 2-thiouridylase MnmA (368 aa).

ATP is bound by residues 11–18 (GMSGGVDS) and M37. Residues 97–99 (NPD) are interaction with target base in tRNA. Residue C102 is the Nucleophile of the active site. C102 and C199 are disulfide-bonded. G127 contributes to the ATP binding site. The tract at residues 149 to 151 (KDQ) is interaction with tRNA. C199 serves as the catalytic Cysteine persulfide intermediate. The tract at residues 311-312 (RY) is interaction with tRNA.

This sequence belongs to the MnmA/TRMU family. In terms of assembly, interacts with TusE.

Its subcellular location is the cytoplasm. It carries out the reaction S-sulfanyl-L-cysteinyl-[protein] + uridine(34) in tRNA + AH2 + ATP = 2-thiouridine(34) in tRNA + L-cysteinyl-[protein] + A + AMP + diphosphate + H(+). In terms of biological role, catalyzes the 2-thiolation of uridine at the wobble position (U34) of tRNA(Lys), tRNA(Glu) and tRNA(Gln), leading to the formation of s(2)U34, the first step of tRNA-mnm(5)s(2)U34 synthesis. Sulfur is provided by IscS, via a sulfur-relay system. Binds ATP and its substrate tRNAs. In Escherichia coli O1:K1 / APEC, this protein is tRNA-specific 2-thiouridylase MnmA.